The sequence spans 383 residues: MRFKILQKDGLARTGIIETQRGIIHTPAFMPVGTNGTVKAMTPEEVRQIGYEIILSNTYHLYLRPGHETIKMIGGIHKFINWHCPILTDSGGFQIYSLASLRKITLEGVEFRSHIDGSLHFINPEKAIDIQLALGSDIMMVLDECIPYPADEEYVEKSIKLTTEWAKRCKEHFEKQDTYQALFGIIQGGVFSDLRIRALEELLKIDFHGYAIGGLSVGEPKTDMYKIVKDISPLMPEDKPHYLMGVGDLIDVLHAVEHGIDMFDCVIPTRNARNGTLFTSQGRISIKRSEFKEDLSPLDPDCDCYTCKNYSRAFLRHLYTCREILSMRLNTIHNLYFYCRFFEKMRQAIAERRFQEFKKEWLPVLEKNFYQESNDFHHSLENY.

Asp89 (proton acceptor) is an active-site residue. Substrate is bound by residues Asp89–Phe93, Asp143, Gln187, and Gly214. Residues Gly245–Asp251 form an RNA binding region. Asp264 acts as the Nucleophile in catalysis. Residues Thr269–Arg273 form an RNA binding; important for wobble base 34 recognition region. Cys302, Cys304, Cys307, and His333 together coordinate Zn(2+).

Belongs to the queuine tRNA-ribosyltransferase family. In terms of assembly, homodimer. Within each dimer, one monomer is responsible for RNA recognition and catalysis, while the other monomer binds to the replacement base PreQ1. It depends on Zn(2+) as a cofactor.

The catalysed reaction is 7-aminomethyl-7-carbaguanine + guanosine(34) in tRNA = 7-aminomethyl-7-carbaguanosine(34) in tRNA + guanine. It participates in tRNA modification; tRNA-queuosine biosynthesis. In terms of biological role, catalyzes the base-exchange of a guanine (G) residue with the queuine precursor 7-aminomethyl-7-deazaguanine (PreQ1) at position 34 (anticodon wobble position) in tRNAs with GU(N) anticodons (tRNA-Asp, -Asn, -His and -Tyr). Catalysis occurs through a double-displacement mechanism. The nucleophile active site attacks the C1' of nucleotide 34 to detach the guanine base from the RNA, forming a covalent enzyme-RNA intermediate. The proton acceptor active site deprotonates the incoming PreQ1, allowing a nucleophilic attack on the C1' of the ribose to form the product. After dissociation, two additional enzymatic reactions on the tRNA convert PreQ1 to queuine (Q), resulting in the hypermodified nucleoside queuosine (7-(((4,5-cis-dihydroxy-2-cyclopenten-1-yl)amino)methyl)-7-deazaguanosine). The polypeptide is Queuine tRNA-ribosyltransferase (Thermodesulfovibrio yellowstonii (strain ATCC 51303 / DSM 11347 / YP87)).